Reading from the N-terminus, the 337-residue chain is tRNA N6-adenosine threonylcarbamoyltransferase (337 aa).

Residues H111 and H115 each coordinate Fe cation. Substrate-binding positions include 134-138 (LVSGG), D167, G180, and N272. D300 provides a ligand contact to Fe cation.

Belongs to the KAE1 / TsaD family. Fe(2+) serves as cofactor.

The protein localises to the cytoplasm. It carries out the reaction L-threonylcarbamoyladenylate + adenosine(37) in tRNA = N(6)-L-threonylcarbamoyladenosine(37) in tRNA + AMP + H(+). Functionally, required for the formation of a threonylcarbamoyl group on adenosine at position 37 (t(6)A37) in tRNAs that read codons beginning with adenine. Is involved in the transfer of the threonylcarbamoyl moiety of threonylcarbamoyl-AMP (TC-AMP) to the N6 group of A37, together with TsaE and TsaB. TsaD likely plays a direct catalytic role in this reaction. This is tRNA N6-adenosine threonylcarbamoyltransferase from Yersinia enterocolitica serotype O:8 / biotype 1B (strain NCTC 13174 / 8081).